The chain runs to 284 residues: Cytosolic Fe-S cluster assembly factor NUBP2 homolog (284 aa).

ATP is bound at residue 27–34 (GKGGVGKS). [4Fe-4S] cluster is bound by residues C200 and C203.

It belongs to the Mrp/NBP35 ATP-binding proteins family. NUBP2/CFD1 subfamily. Heterotetramer of 2 NUBP1 and 2 NUBP2 chains. It depends on [4Fe-4S] cluster as a cofactor.

Its subcellular location is the cytoplasm. Component of the cytosolic iron-sulfur (Fe/S) protein assembly (CIA) machinery. Required for maturation of extramitochondrial Fe-S proteins. The NUBP1-NUBP2 heterotetramer forms a Fe-S scaffold complex, mediating the de novo assembly of an Fe-S cluster and its transfer to target apoproteins. The polypeptide is Cytosolic Fe-S cluster assembly factor NUBP2 homolog (Monosiga brevicollis (Choanoflagellate)).